The primary structure comprises 266 residues: Norfluorocurarine synthase 1 (266 aa).

The AB hydrolase-1 domain maps to 11-121 (HFVLVHGAGH…VMPDAVHPPS (111 aa)). Active-site residues include Ser-86, Asp-216, and His-244.

The protein belongs to the AB hydrolase superfamily. Homodimer. As to expression, mainly expressed in roots.

The catalysed reaction is 17-dehydropreakuammicine + H2O = norfluorocurarine + methanol + CO2. The protein operates within alkaloid biosynthesis. Hydrolase involved in the biosynthesis of curare monoterpene indole alkaloids (MIAs), natural products such as strychnine, a neurotoxic compound used as a pesticide to control rodents, and its pharmacologically active derivatives, including brucine, used to regulate blood pressure. Curare alkaloids act as animal glycine receptor antagonists. Catalyzes the conversion of dehydropreakuammicine to norfluorocurarine. This is Norfluorocurarine synthase 1 from Strychnos nux-vomica (Poison nut).